The chain runs to 453 residues: Ribosomal protein uS12 methylthiotransferase RimO (453 aa).

An MTTase N-terminal domain is found at 6–116 (PKVGFVSLGC…VMEAVHEALP (111 aa)). [4Fe-4S] cluster contacts are provided by C15, C51, C80, C147, C151, and C154. Residues 133-370 (LTPRHYAYLK…MEKQAQISAA (238 aa)) form the Radical SAM core domain. A TRAM domain is found at 373–441 (EAKIGTVQQC…DHDLYGDALP (69 aa)).

It belongs to the methylthiotransferase family. RimO subfamily. [4Fe-4S] cluster serves as cofactor.

The protein resides in the cytoplasm. The catalysed reaction is L-aspartate(89)-[ribosomal protein uS12]-hydrogen + (sulfur carrier)-SH + AH2 + 2 S-adenosyl-L-methionine = 3-methylsulfanyl-L-aspartate(89)-[ribosomal protein uS12]-hydrogen + (sulfur carrier)-H + 5'-deoxyadenosine + L-methionine + A + S-adenosyl-L-homocysteine + 2 H(+). Functionally, catalyzes the methylthiolation of an aspartic acid residue of ribosomal protein uS12. The chain is Ribosomal protein uS12 methylthiotransferase RimO from Stenotrophomonas maltophilia (strain R551-3).